A 248-amino-acid chain; its full sequence is 2,3-bisphosphoglycerate-dependent phosphoglycerate mutase (248 aa).

Substrate contacts are provided by residues 8–15, 21–22, arginine 60, 87–90, lysine 98, 114–115, and 183–184; these read RHGESAWN, TG, EKHY, RR, and GN. Histidine 9 acts as the Tele-phosphohistidine intermediate in catalysis. Catalysis depends on glutamate 87, which acts as the Proton donor/acceptor.

It belongs to the phosphoglycerate mutase family. BPG-dependent PGAM subfamily.

It carries out the reaction (2R)-2-phosphoglycerate = (2R)-3-phosphoglycerate. The protein operates within carbohydrate degradation; glycolysis; pyruvate from D-glyceraldehyde 3-phosphate: step 3/5. In terms of biological role, catalyzes the interconversion of 2-phosphoglycerate and 3-phosphoglycerate. The polypeptide is 2,3-bisphosphoglycerate-dependent phosphoglycerate mutase (Bacteroides fragilis (strain ATCC 25285 / DSM 2151 / CCUG 4856 / JCM 11019 / LMG 10263 / NCTC 9343 / Onslow / VPI 2553 / EN-2)).